A 662-amino-acid chain; its full sequence is UvrABC system protein B (662 aa).

Positions 31–188 (DNIEGGEKAQ…NDLVDIQFER (158 aa)) constitute a Helicase ATP-binding domain. 44-51 (GATGTGKT) provides a ligand contact to ATP. The Beta-hairpin motif lies at 97 to 120 (YYDYYQPEAYVPSSDTYIEKDSSV). Residues 435–601 (QIDDLLGEIN…TIKKEIRDLI (167 aa)) enclose the Helicase C-terminal domain. Residues 626-661 (KELVKKLEKQMQEAVEVLDFELAAQIRDMMLEVKAL) form the UVR domain.

Belongs to the UvrB family. Forms a heterotetramer with UvrA during the search for lesions. Interacts with UvrC in an incision complex.

The protein localises to the cytoplasm. In terms of biological role, the UvrABC repair system catalyzes the recognition and processing of DNA lesions. A damage recognition complex composed of 2 UvrA and 2 UvrB subunits scans DNA for abnormalities. Upon binding of the UvrA(2)B(2) complex to a putative damaged site, the DNA wraps around one UvrB monomer. DNA wrap is dependent on ATP binding by UvrB and probably causes local melting of the DNA helix, facilitating insertion of UvrB beta-hairpin between the DNA strands. Then UvrB probes one DNA strand for the presence of a lesion. If a lesion is found the UvrA subunits dissociate and the UvrB-DNA preincision complex is formed. This complex is subsequently bound by UvrC and the second UvrB is released. If no lesion is found, the DNA wraps around the other UvrB subunit that will check the other stand for damage. The chain is UvrABC system protein B from Streptococcus pneumoniae (strain Taiwan19F-14).